The following is a 3071-amino-acid chain: Intermembrane lipid transfer protein vps1301 (3071 aa).

The Chorein N-terminal domain maps to 2 to 115 (LEGLVAGLLN…QQALKQEQLD (114 aa)). Residues 2143–2415 (HIEIFSPYII…KYSWDYPCCA (273 aa)) form the SHR-BD domain.

Belongs to the VPS13 family.

It localises to the golgi apparatus. Its subcellular location is the trans-Golgi network. Mediates the transfer of lipids between membranes at organelle contact sites. May play a role in mitochondrial lipid homeostasis, Golgi vesicle transport, reticulophagy, actin cytoskeleton organization and formation of the forespore membrane. The sequence is that of Intermembrane lipid transfer protein vps1301 from Schizosaccharomyces pombe (strain 972 / ATCC 24843) (Fission yeast).